The sequence spans 456 residues: RuvB-like helicase 1 (456 aa).

An ATP-binding site is contributed by 70–77 (GPPGTGKT).

This sequence belongs to the RuvB family. In terms of assembly, forms homohexameric rings. May form a dodecamer with rept made of two stacked hexameric rings. Component of the chromatin remodeling Ino80 complex. Interacts with Myc and rept. Higher expression occurs in primordia of mesoderm, anterior and posterior midgut and cephalic furrow early in gastrulation, as well as in endoderm and mesoderm lineages during germ band extension. Later in development expression is only maintained in endoderm cells. Expressed in thoracic and abdominal segment neural precursors of all embryonic chordotonal organs.

It is found in the nucleus. The enzyme catalyses ATP + H2O = ADP + phosphate + H(+). Acts as a transcriptional coactivator in Wg signaling caused by altered arm signaling. Pont and rept interfere antagonistically with nuclear arm signaling function, and are required to enhance or reduce arm activity, respectively. Also an essential cofactor for the normal function of Myc; required for cellular proliferation and growth. Its function is as follows. Proposed core component of the chromatin remodeling Ino80 complex which is involved in transcriptional regulation, DNA replication and probably DNA repair. The sequence is that of RuvB-like helicase 1 from Drosophila melanogaster (Fruit fly).